The primary structure comprises 28 residues: Cruzioseptin-3 (28 aa).

Gln25 carries the post-translational modification Glutamine amide. A propeptide spanning residues 27 to 28 is cleaved from the precursor; the sequence is EQ.

In terms of tissue distribution, expressed by the skin glands.

It localises to the secreted. In terms of biological role, has antimicrobial activity against Gram-negative bacterium E.coli (MIC=13.32 uM), against Gram-positive bacterium S.aureus (MIC=13.32 uM) and against fungus C.albicans (MIC=13.32 uM). At higher concentrations also has a bactericidal and fungicidal effect. Has hemagglutinating activity against horse erythrocytes. The sequence is that of Cruzioseptin-3 from Cruziohyla calcarifer (Splendid leaf frog).